The sequence spans 279 residues: Sulfur carrier protein FdhD (279 aa).

Cys-112 acts as the Cysteine persulfide intermediate in catalysis.

It belongs to the FdhD family.

Its subcellular location is the cytoplasm. Functionally, required for formate dehydrogenase (FDH) activity. Acts as a sulfur carrier protein that transfers sulfur from IscS to the molybdenum cofactor prior to its insertion into FDH. This is Sulfur carrier protein FdhD from Nocardia farcinica (strain IFM 10152).